A 329-amino-acid chain; its full sequence is 3-isopropylmalate dehydrogenase (329 aa).

Substrate-binding residues include R83, R93, R114, and D200. Mg(2+) contacts are provided by D200, D224, and D228. NAD(+) is bound at residue 257-269 (GSAPQIAGKNIAN).

This sequence belongs to the isocitrate and isopropylmalate dehydrogenases family. As to quaternary structure, homotetramer. It depends on Mg(2+) as a cofactor. The cofactor is Mn(2+).

Its subcellular location is the cytoplasm. The enzyme catalyses (2R,3S)-3-isopropylmalate + NAD(+) = 4-methyl-2-oxopentanoate + CO2 + NADH. The protein operates within amino-acid biosynthesis; L-leucine biosynthesis; L-leucine from 3-methyl-2-oxobutanoate: step 3/4. Its function is as follows. Catalyzes the oxidation of 3-carboxy-2-hydroxy-4-methylpentanoate (3-isopropylmalate) to 3-carboxy-4-methyl-2-oxopentanoate. The product decarboxylates to 4-methyl-2 oxopentanoate. This Methanothermobacter thermautotrophicus (strain ATCC 29096 / DSM 1053 / JCM 10044 / NBRC 100330 / Delta H) (Methanobacterium thermoautotrophicum) protein is 3-isopropylmalate dehydrogenase (leuB).